A 1183-amino-acid chain; its full sequence is DNA-directed RNA polymerase subunit beta (1183 aa).

It belongs to the RNA polymerase beta chain family. The RNAP catalytic core consists of 2 alpha, 1 beta, 1 beta' and 1 omega subunit. When a sigma factor is associated with the core the holoenzyme is formed, which can initiate transcription.

The catalysed reaction is RNA(n) + a ribonucleoside 5'-triphosphate = RNA(n+1) + diphosphate. Its function is as follows. DNA-dependent RNA polymerase catalyzes the transcription of DNA into RNA using the four ribonucleoside triphosphates as substrates. This is DNA-directed RNA polymerase subunit beta from Staphylococcus aureus (strain COL).